The sequence spans 155 residues: uncharacterized protein (155 aa).

One can recognise a Macro domain in the interval 1-155 (MIVKYIKGDI…IVIVDWEPLL (155 aa)).

This is an uncharacterized protein from Escherichia coli (Bacteriophage T4).